The primary structure comprises 186 residues: Mediator of RNA polymerase II transcription subunit 10a (186 aa).

It belongs to the Mediator complex subunit 10 family. Mono-, di- and oligomers. Component of the Mediator complex. Interacts with GEBPL.

The protein localises to the nucleus. Functionally, component of the Mediator complex, a coactivator involved in the regulated transcription of nearly all RNA polymerase II-dependent genes. Mediator functions as a bridge to convey information from gene-specific regulatory proteins to the basal RNA polymerase II transcription machinery. The Mediator complex, having a compact conformation in its free form, is recruited to promoters by direct interactions with regulatory proteins and serves for the assembly of a functional pre-initiation complex with RNA polymerase II and the general transcription factors. This Arabidopsis thaliana (Mouse-ear cress) protein is Mediator of RNA polymerase II transcription subunit 10a.